We begin with the raw amino-acid sequence, 156 residues long: Putative F-box protein R637 (156 aa).

The F-box domain maps to 4-51 (HISSLLNEDCVRHIMCFLTDKEKGKFCLTCRDLLYLIKDVKFNDPVNK).

In Acanthamoeba polyphaga mimivirus (APMV), this protein is Putative F-box protein R637.